Reading from the N-terminus, the 279-residue chain is DNA repair protein RecO (279 aa).

Belongs to the RecO family.

In terms of biological role, involved in DNA repair and RecF pathway recombination. The polypeptide is DNA repair protein RecO (Thermosynechococcus vestitus (strain NIES-2133 / IAM M-273 / BP-1)).